The primary structure comprises 533 residues: CEP295 N-terminal-like protein (533 aa).

Disordered regions lie at residues 1–40 (MQRD…TTLQ), 84–176 (RSMG…RVTR), 286–333 (LKAD…ETTE), and 370–399 (AGTS…LEDE). Residues 40 to 72 (QQWKARQLQRLAEELKAEWQEARLQQVRQAERL) are a coiled coil. A compositionally biased stretch (basic and acidic residues) spans 107–126 (KERNRAAFREERGRREEHPR). The stretch at 416 to 531 (MALRQKQKAE…ARKRLQEFQK (116 aa)) forms a coiled coil.

Expressed in mature spermatozoa (at protein level). Detected in retina, lung and kidney. In brain, highly expressed in brain-stem, cerebral cortex and thalamus with lesser expression in cerebellum and hippocampus.

The protein resides in the cell projection. The protein localises to the cilium. This chain is CEP295 N-terminal-like protein, found in Mus musculus (Mouse).